The primary structure comprises 250 residues: Solute carrier family 66 member 2 (250 aa).

Residues arginine 14–glutamine 80 form the PQ-loop 1 domain. 6 consecutive transmembrane segments (helical) span residues methionine 15–proline 35, phenylalanine 49–phenylalanine 69, histidine 72–leucine 92, phenylalanine 118–valine 138, leucine 151–tyrosine 173, and phenylalanine 212–leucine 232. The PQ-loop 2 domain occupies serine 149–cysteine 215.

It is found in the membrane. This is Solute carrier family 66 member 2 (slc66a2) from Xenopus laevis (African clawed frog).